Reading from the N-terminus, the 745-residue chain is 1,4-alpha-glucan branching enzyme GlgB (745 aa).

Catalysis depends on aspartate 416, which acts as the Nucleophile. Glutamate 469 serves as the catalytic Proton donor.

Belongs to the glycosyl hydrolase 13 family. GlgB subfamily. In terms of assembly, monomer.

The catalysed reaction is Transfers a segment of a (1-&gt;4)-alpha-D-glucan chain to a primary hydroxy group in a similar glucan chain.. The protein operates within glycan biosynthesis; glycogen biosynthesis. Its function is as follows. Catalyzes the formation of the alpha-1,6-glucosidic linkages in glycogen by scission of a 1,4-alpha-linked oligosaccharide from growing alpha-1,4-glucan chains and the subsequent attachment of the oligosaccharide to the alpha-1,6 position. In Shewanella sp. (strain MR-7), this protein is 1,4-alpha-glucan branching enzyme GlgB.